The primary structure comprises 311 residues: Homoserine kinase (311 aa).

An ATP-binding site is contributed by 96-106 (PLARGLGSSAA).

The protein belongs to the GHMP kinase family. Homoserine kinase subfamily.

It is found in the cytoplasm. The catalysed reaction is L-homoserine + ATP = O-phospho-L-homoserine + ADP + H(+). It participates in amino-acid biosynthesis; L-threonine biosynthesis; L-threonine from L-aspartate: step 4/5. Functionally, catalyzes the ATP-dependent phosphorylation of L-homoserine to L-homoserine phosphate. This is Homoserine kinase from Natranaerobius thermophilus (strain ATCC BAA-1301 / DSM 18059 / JW/NM-WN-LF).